Here is a 394-residue protein sequence, read N- to C-terminus: D-aspartate oxidase (394 aa).

Residues Ile-19, Ala-57, Ser-58, and Gly-62 each coordinate FAD. Residues 190 to 210 (LIGHEPTAGVIVCVGLGALVL) form a helical membrane-spanning segment. A glycan (N-linked (GlcNAc...) asparagine) is linked at Asn-214. 3 residues coordinate FAD: Arg-342, Gly-373, and Gln-375.

The protein belongs to the DAMOX/DASOX family. FAD serves as cofactor.

The protein resides in the membrane. It catalyses the reaction D-aspartate + O2 + H2O = oxaloacetate + H2O2 + NH4(+). Functionally, selectively catalyzes the oxidative deamination of acidic amino acids. Protects the organism from the toxicity of D-amino acids. Enables the organism to utilize D-amino acids as a source of nutrients. Enables the organism to utilize D-aspartate and D-asparagine as a source of nitrogen. May play a role in its interaction with the host. The chain is D-aspartate oxidase from Cryptococcus neoformans var. grubii serotype A (strain H99 / ATCC 208821 / CBS 10515 / FGSC 9487) (Filobasidiella neoformans var. grubii).